The primary structure comprises 102 residues: Small ribosomal subunit protein uS17 (102 aa).

Positions 1-27 are disordered; sequence MEQTEEHTDTHTDEQDEAVDRNDRKER.

The protein belongs to the universal ribosomal protein uS17 family. Part of the 30S ribosomal subunit.

In terms of biological role, one of the primary rRNA binding proteins, it binds specifically to the 5'-end of 16S ribosomal RNA. The chain is Small ribosomal subunit protein uS17 from Salinibacter ruber (strain DSM 13855 / M31).